Here is a 240-residue protein sequence, read N- to C-terminus: UDP-2,3-diacylglucosamine hydrolase (240 aa).

Mn(2+) is bound by residues D8, H10, D41, N79, and H114. 79–80 serves as a coordination point for substrate; sequence NR. D122, S160, N164, K167, and H195 together coordinate substrate. Mn(2+) contacts are provided by H195 and H197.

The protein belongs to the LpxH family. Requires Mn(2+) as cofactor.

The protein resides in the cell inner membrane. The catalysed reaction is UDP-2-N,3-O-bis[(3R)-3-hydroxytetradecanoyl]-alpha-D-glucosamine + H2O = 2-N,3-O-bis[(3R)-3-hydroxytetradecanoyl]-alpha-D-glucosaminyl 1-phosphate + UMP + 2 H(+). The protein operates within glycolipid biosynthesis; lipid IV(A) biosynthesis; lipid IV(A) from (3R)-3-hydroxytetradecanoyl-[acyl-carrier-protein] and UDP-N-acetyl-alpha-D-glucosamine: step 4/6. Its function is as follows. Hydrolyzes the pyrophosphate bond of UDP-2,3-diacylglucosamine to yield 2,3-diacylglucosamine 1-phosphate (lipid X) and UMP by catalyzing the attack of water at the alpha-P atom. Involved in the biosynthesis of lipid A, a phosphorylated glycolipid that anchors the lipopolysaccharide to the outer membrane of the cell. The protein is UDP-2,3-diacylglucosamine hydrolase of Yersinia pestis bv. Antiqua (strain Angola).